A 207-amino-acid chain; its full sequence is Casparian strip membrane protein 1 (207 aa).

The segment covering 1–12 has biased composition (polar residues); the sequence is MEGESTAVNITE. The interval 1–24 is disordered; the sequence is MEGESTAVNITETPKERKGKAPLL. Topologically, residues 1–48 are cytoplasmic; sequence MEGESTAVNITETPKERKGKAPLLAPPPASGGIKTIVQKAPKGGYKRG. Residues 49–69 traverse the membrane as a helical segment; the sequence is LAVFDVVLRIAGIAAALGAVI. Over 70–98 the chain is Extracellular; it reads AMGSTDQTLPFFTQFFQFKAEFDDLPVFT. A helical membrane pass occupies residues 99-119; that stretch reads FFVIANAITAAYLALSIPISI. The Cytoplasmic portion of the chain corresponds to 120–138; the sequence is VCIIRPHLVGPRVLLTFLD. Residues 139 to 159 traverse the membrane as a helical segment; sequence TVMVGLTTAAAGGAASIVYLA. Residues 160 to 184 are Extracellular-facing; the sequence is HNGNSDANWPAICQQFNDFCQEVSG. A helical membrane pass occupies residues 185-205; that stretch reads AVVASFITVVVLMFLIVLSAF. The Cytoplasmic segment spans residues 206 to 207; it reads SL.

This sequence belongs to the Casparian strip membrane proteins (CASP) family. As to quaternary structure, homodimer and heterodimers.

The protein resides in the cell membrane. Regulates membrane-cell wall junctions and localized cell wall deposition. Required for establishment of the Casparian strip membrane domain (CSD) and the subsequent formation of Casparian strips, a cell wall modification of the root endodermis that determines an apoplastic barrier between the intraorganismal apoplasm and the extraorganismal apoplasm and prevents lateral diffusion. The polypeptide is Casparian strip membrane protein 1 (Taraxacum kok-saghyz (Russian dandelion)).